Reading from the N-terminus, the 308-residue chain is Ribosomal protein L11 methyltransferase (308 aa).

Residues T157, G178, D200, and N243 each contribute to the S-adenosyl-L-methionine site.

This sequence belongs to the methyltransferase superfamily. PrmA family.

It localises to the cytoplasm. The enzyme catalyses L-lysyl-[protein] + 3 S-adenosyl-L-methionine = N(6),N(6),N(6)-trimethyl-L-lysyl-[protein] + 3 S-adenosyl-L-homocysteine + 3 H(+). Methylates ribosomal protein L11. The sequence is that of Ribosomal protein L11 methyltransferase from Desulforamulus reducens (strain ATCC BAA-1160 / DSM 100696 / MI-1) (Desulfotomaculum reducens).